Consider the following 282-residue polypeptide: MATYLIGDVHGCYDELIALLHKVEFTPGKDTLWLTGDLVARGPGSLDVLRYVKSLGDSVRLVLGNHDLHLLAVFAGISRNKPKDRLTPLLEAPDADELLNWLRRQPLLQIDEEKKLVMAHAGITPQWDLQTAKECARDVEAVLSSDSYPFFLDAMYGDMPNNWSPELRGLGRLRFITNAFTRMRFCFPNGQLDMYSKESPEEAPAPLKPWFAIPGPVAEEYSIAFGHWASLEGKGTPEGIYALDTGCCWGGTLTCLRWEDKQYFVQPSNRHKDLGEGEAVAS.

It belongs to the Ap4A hydrolase family.

The enzyme catalyses P(1),P(4)-bis(5'-adenosyl) tetraphosphate + H2O = 2 ADP + 2 H(+). In terms of biological role, hydrolyzes diadenosine 5',5'''-P1,P4-tetraphosphate to yield ADP. The protein is Bis(5'-nucleosyl)-tetraphosphatase, symmetrical of Escherichia fergusonii (strain ATCC 35469 / DSM 13698 / CCUG 18766 / IAM 14443 / JCM 21226 / LMG 7866 / NBRC 102419 / NCTC 12128 / CDC 0568-73).